A 1646-amino-acid chain; its full sequence is Monensin-resistant homolog 2 (1646 aa).

This sequence belongs to the MON2 family.

It is found in the golgi apparatus. May be required for traffic between late Golgi and early endosomes. The chain is Monensin-resistant homolog 2 (mon-2) from Caenorhabditis elegans.